Reading from the N-terminus, the 441-residue chain is Damage-control phosphatase ARMT1 (441 aa).

N-acetylalanine is present on A2. At K40 the chain carries N6-acetyllysine. The residue at position 102 (S102) is a Phosphoserine. Mn(2+) contacts are provided by D253 and N254. 253 to 254 (DN) provides a ligand contact to substrate. The S-adenosyl-L-methionine site is built by E258 and D291. D291 is a binding site for Mn(2+). Substrate contacts are provided by residues 367–371 (DLNYR) and K404. The Subfamily III RTxK motif motif lies at 401–404 (RTLK).

It belongs to the damage-control phosphatase family. Sugar phosphate phosphatase III subfamily. It depends on Mn(2+) as a cofactor. The cofactor is Ni(2+). Post-translationally, automethylated.

The enzyme catalyses beta-D-fructose 1-phosphate + H2O = D-fructose + phosphate. The catalysed reaction is beta-D-fructose 6-phosphate = dihydroxyacetone + D-glyceraldehyde 3-phosphate. It carries out the reaction L-glutamyl-[protein] + S-adenosyl-L-methionine = [protein]-L-glutamate 5-O-methyl ester + S-adenosyl-L-homocysteine. Functionally, metal-dependent phosphatase that shows phosphatase activity against several substrates, including fructose-1-phosphate and fructose-6-phosphate. Its preference for fructose-1-phosphate, a strong glycating agent that causes DNA damage rather than a canonical yeast metabolite, suggests a damage-control function in hexose phosphate metabolism. Has also been shown to have O-methyltransferase activity that methylates glutamate residues of target proteins to form gamma-glutamyl methyl ester residues. Possibly methylates PCNA, suggesting it is involved in the DNA damage response. This Homo sapiens (Human) protein is Damage-control phosphatase ARMT1.